Reading from the N-terminus, the 176-residue chain is MKNKYHLTTDELQLFKESIAGAKKLKQDTIVHRSPPKLGKKIAPERLLQEQVDASYYFSDEFQPQLDTEGPTRYVRPGVDHFEVKKLRRGDYSPDMFLDLHGLTQKQAKQELGALIAACKREHVHCACVMHGHGKHVLKQQTPLWLAQHPDVLAFHQAPKEWGGTAALLVLVELEQ.

A Smr domain is found at 98 to 173 (LDLHGLTQKQ…GTAALLVLVE (76 aa)).

The protein belongs to the SmrB family. In terms of assembly, associates with collided ribosomes, but not with correctly translating polysomes.

Functionally, acts as a ribosome collision sensor. Detects stalled/collided disomes (pairs of ribosomes where the leading ribosome is stalled and a second ribosome has collided with it) and endonucleolytically cleaves mRNA at the 5' boundary of the stalled ribosome. Stalled/collided disomes form a new interface (primarily via the 30S subunits) that binds SmrB. Cleaved mRNA becomes available for tmRNA ligation, leading to ribosomal subunit dissociation and rescue of stalled ribosomes. The chain is Ribosome rescue factor SmrB from Yersinia enterocolitica serotype O:8 / biotype 1B (strain NCTC 13174 / 8081).